We begin with the raw amino-acid sequence, 705 residues long: 1,4-alpha-glucan branching enzyme GlgB (705 aa).

D309 (nucleophile) is an active-site residue. E360 functions as the Proton donor in the catalytic mechanism. Residues 654–705 (VQVERAADPRPNEQQRLVAETPAHEGGRSAPADAAESAEQKPDDEQKGGKKA) are disordered. The span at 691 to 705 (AEQKPDDEQKGGKKA) shows a compositional bias: basic and acidic residues.

It belongs to the glycosyl hydrolase 13 family. GlgB subfamily. Monomer.

The enzyme catalyses Transfers a segment of a (1-&gt;4)-alpha-D-glucan chain to a primary hydroxy group in a similar glucan chain.. Its pathway is glycan biosynthesis; glycogen biosynthesis. Its function is as follows. Catalyzes the formation of the alpha-1,6-glucosidic linkages in glycogen by scission of a 1,4-alpha-linked oligosaccharide from growing alpha-1,4-glucan chains and the subsequent attachment of the oligosaccharide to the alpha-1,6 position. In Deinococcus radiodurans (strain ATCC 13939 / DSM 20539 / JCM 16871 / CCUG 27074 / LMG 4051 / NBRC 15346 / NCIMB 9279 / VKM B-1422 / R1), this protein is 1,4-alpha-glucan branching enzyme GlgB.